Here is a 232-residue protein sequence, read N- to C-terminus: MKIGIIGAMEEEVTLLRDKIDNRQTITLGGCEIYTGQLNGTEVALLKSGIGKVAAALGATLLLEHSKPDVIINTGSAGGLASTLKVGDIVVSDEARYHDADVTAFGYEYGQLPGCPAGFKADDKLIAAAESCIRELNLNAVRGLIVSGDAFINGSVGLAKIRHNFPDAVAVEMEATAIAHVCYNFNVPFVVVRAISDVADQQSHLSFDEFLAVAAKQSTLMVETLVQKLAHG.

Glu-12 functions as the Proton acceptor in the catalytic mechanism. Residues Gly-78, Ile-152, and Met-173–Glu-174 contribute to the substrate site. The active-site Proton donor is the Asp-197.

Belongs to the PNP/UDP phosphorylase family. MtnN subfamily. As to quaternary structure, homodimer.

The enzyme catalyses S-adenosyl-L-homocysteine + H2O = S-(5-deoxy-D-ribos-5-yl)-L-homocysteine + adenine. It carries out the reaction S-methyl-5'-thioadenosine + H2O = 5-(methylsulfanyl)-D-ribose + adenine. The catalysed reaction is 5'-deoxyadenosine + H2O = 5-deoxy-D-ribose + adenine. Its pathway is amino-acid biosynthesis; L-methionine biosynthesis via salvage pathway; S-methyl-5-thio-alpha-D-ribose 1-phosphate from S-methyl-5'-thioadenosine (hydrolase route): step 1/2. Functionally, catalyzes the irreversible cleavage of the glycosidic bond in both 5'-methylthioadenosine (MTA) and S-adenosylhomocysteine (SAH/AdoHcy) to adenine and the corresponding thioribose, 5'-methylthioribose and S-ribosylhomocysteine, respectively. Also cleaves 5'-deoxyadenosine, a toxic by-product of radical S-adenosylmethionine (SAM) enzymes, into 5-deoxyribose and adenine. Thus, is required for in vivo function of the radical SAM enzymes biotin synthase and lipoic acid synthase, that are inhibited by 5'-deoxyadenosine accumulation. This Salmonella dublin (strain CT_02021853) protein is 5'-methylthioadenosine/S-adenosylhomocysteine nucleosidase.